Reading from the N-terminus, the 942-residue chain is UvrABC system protein A (942 aa).

ATP is bound at residue 31 to 38 (GLSGSGKS). The C4-type zinc-finger motif lies at 253-280 (CSECGYSLPELEPRLFSFNNPAGACPTC). 2 consecutive ABC transporter domains span residues 310-586 (WDRR…EASI) and 606-936 (YDAN…RFLT). 639-646 (GVSGSGKS) lines the ATP pocket. The segment at 739–765 (CEACQGDGVIKVEMHFLPDVYVPCDHC) adopts a C4-type zinc-finger fold.

It belongs to the ABC transporter superfamily. UvrA family. As to quaternary structure, forms a heterotetramer with UvrB during the search for lesions.

It localises to the cytoplasm. Functionally, the UvrABC repair system catalyzes the recognition and processing of DNA lesions. UvrA is an ATPase and a DNA-binding protein. A damage recognition complex composed of 2 UvrA and 2 UvrB subunits scans DNA for abnormalities. When the presence of a lesion has been verified by UvrB, the UvrA molecules dissociate. The chain is UvrABC system protein A from Haemophilus ducreyi (strain 35000HP / ATCC 700724).